The chain runs to 762 residues: Multifunctional tryptophan biosynthesis protein (762 aa).

The Glutamine amidotransferase type-1 domain occupies Asn25 to Glu224. Residue Gly76–Gly78 participates in L-glutamine binding. The active-site Nucleophile; for GATase activity is Cys104. Residues Gln108 and Ser154–Leu155 contribute to the L-glutamine site. Residues His198 and Glu200 each act as for GATase activity in the active site. Residues Ile251–Cys515 are indole-3-glycerol phosphate synthase. Residues Leu531 to Arg762 form an N-(5'-phosphoribosyl)anthranilate isomerase region.

In terms of assembly, tetramer of two components I and two components II.

The catalysed reaction is chorismate + L-glutamine = anthranilate + pyruvate + L-glutamate + H(+). It catalyses the reaction N-(5-phospho-beta-D-ribosyl)anthranilate = 1-(2-carboxyphenylamino)-1-deoxy-D-ribulose 5-phosphate. It carries out the reaction 1-(2-carboxyphenylamino)-1-deoxy-D-ribulose 5-phosphate + H(+) = (1S,2R)-1-C-(indol-3-yl)glycerol 3-phosphate + CO2 + H2O. Its pathway is amino-acid biosynthesis; L-tryptophan biosynthesis; L-tryptophan from chorismate: step 1/5. It functions in the pathway amino-acid biosynthesis; L-tryptophan biosynthesis; L-tryptophan from chorismate: step 3/5. The protein operates within amino-acid biosynthesis; L-tryptophan biosynthesis; L-tryptophan from chorismate: step 4/5. Its function is as follows. Trifunctional enzyme bearing the Gln amidotransferase (GATase) domain of anthranilate synthase, indole-glycerolphosphate synthase, and phosphoribosylanthranilate isomerase activities. The chain is Multifunctional tryptophan biosynthesis protein (trp-1) from Neurospora crassa (strain ATCC 24698 / 74-OR23-1A / CBS 708.71 / DSM 1257 / FGSC 987).